The primary structure comprises 323 residues: HPr kinase/phosphorylase (323 aa).

Residues H146 and K167 contribute to the active site. 161–168 (GESGLGKS) lines the ATP pocket. S168 lines the Mg(2+) pocket. The active-site Proton acceptor; for phosphorylation activity. Proton donor; for dephosphorylation activity is the D185. An important for the catalytic mechanism of both phosphorylation and dephosphorylation region spans residues 209–218 (LEVRGLGLLD). Position 210 (E210) interacts with Mg(2+). The active site involves R250. The important for the catalytic mechanism of dephosphorylation stretch occupies residues 271 to 276 (QVAAGR).

This sequence belongs to the HPrK/P family. As to quaternary structure, homohexamer. Requires Mg(2+) as cofactor.

The catalysed reaction is [HPr protein]-L-serine + ATP = [HPr protein]-O-phospho-L-serine + ADP + H(+). The enzyme catalyses [HPr protein]-O-phospho-L-serine + phosphate + H(+) = [HPr protein]-L-serine + diphosphate. Functionally, catalyzes the ATP- as well as the pyrophosphate-dependent phosphorylation of a specific serine residue in HPr, a phosphocarrier protein of the phosphoenolpyruvate-dependent sugar phosphotransferase system (PTS). HprK/P also catalyzes the pyrophosphate-producing, inorganic phosphate-dependent dephosphorylation (phosphorolysis) of seryl-phosphorylated HPr (P-Ser-HPr). In Cupriavidus necator (strain ATCC 17699 / DSM 428 / KCTC 22496 / NCIMB 10442 / H16 / Stanier 337) (Ralstonia eutropha), this protein is HPr kinase/phosphorylase.